Here is a 178-residue protein sequence, read N- to C-terminus: ATP synthase subunit delta (178 aa).

Belongs to the ATPase delta chain family. As to quaternary structure, F-type ATPases have 2 components, F(1) - the catalytic core - and F(0) - the membrane proton channel. F(1) has five subunits: alpha(3), beta(3), gamma(1), delta(1), epsilon(1). F(0) has three main subunits: a(1), b(2) and c(10-14). The alpha and beta chains form an alternating ring which encloses part of the gamma chain. F(1) is attached to F(0) by a central stalk formed by the gamma and epsilon chains, while a peripheral stalk is formed by the delta and b chains.

It is found in the cell inner membrane. Its function is as follows. F(1)F(0) ATP synthase produces ATP from ADP in the presence of a proton or sodium gradient. F-type ATPases consist of two structural domains, F(1) containing the extramembraneous catalytic core and F(0) containing the membrane proton channel, linked together by a central stalk and a peripheral stalk. During catalysis, ATP synthesis in the catalytic domain of F(1) is coupled via a rotary mechanism of the central stalk subunits to proton translocation. This protein is part of the stalk that links CF(0) to CF(1). It either transmits conformational changes from CF(0) to CF(1) or is implicated in proton conduction. The polypeptide is ATP synthase subunit delta (Pseudomonas aeruginosa (strain UCBPP-PA14)).